A 623-amino-acid chain; its full sequence is EIN3-binding F-box protein 2 (623 aa).

The F-box domain maps to 52-106; it reads QTSIDVLPEECLFEILRRLPSGQERSACACVSKHWLNLLSSISRSEVNESSVQDV. LRR repeat units follow at residues 119–147, 151–176, 177–202, 203–228, 229–254, 255–281, 307–334, 335–360, 361–386, 387–413, 414–441, 442–467, 468–494, 495–521, 522–547, 548–574, 575–600, and 601–623; these read GKKATDLRLAAIAVGTSSRGGLGKLQIRG, ESKVTDVGLGAVAHGCPSLRIVSLWN, LPAVSDLGLSEIARSCPMIEKLDLSR, CPGITDSGLVAIAENCVNLSDLTIDS, CSGVGNEGLRAIARRCVNLRSISIRS, CPRIGDQGVAFLLAQAGSYLTKVKLQM, LQGVNEKGFWVMGNAKGLKKLKSLSVMS, CRGMTDVGLEAVGNGCPDLKHVSLNK, CLLVSGKGLVALAKSALSLESLKLEE, CHRINQFGLMGFLMNCGSKLKAFSLAN, CLGISDFNSESSLPSPSCSSLRSLSIRC, CPGFGDASLAFLGKFCHQLQDVELCG, LNGVTDAGVRELLQSNNVGLVKVNLSE, CINVSDNTVSAISVCHGRTLESLNLDG, CKNITNASLVAVAKNCYSVNDLDISN, TLVSDHGIKALASSPNHLNLQVLSIGG, CSSITDKSKACIQKLGRTLLGLNIQR, and CGRISSSTVDTLLENLWRCDILY.

Part of a SCF (SKP1-cullin-F-box) protein ligase complex. Interacts with CUL1, SKP1A/ASK1, SKP1B/ASK2, EIN3, and EIL1. In terms of tissue distribution, ubiquitous.

The protein localises to the nucleus. It participates in protein modification; protein ubiquitination. Its function is as follows. Component of SCF(EBF1) E3 ubiquitin ligase complexes, which may mediate the ubiquitination and subsequent proteasomal degradation of target proteins (probably including EIN3 and EIL1). Regulator of the ethylene signaling cascade by modulating the stability of EIN3 and EIL1 proteins. This chain is EIN3-binding F-box protein 2 (EBF2), found in Arabidopsis thaliana (Mouse-ear cress).